Consider the following 245-residue polypeptide: Ribonuclease 3 (245 aa).

Positions F17–G146 constitute an RNase III domain. Residue E59 coordinates Mg(2+). D63 is an active-site residue. D132 and E135 together coordinate Mg(2+). Residue E135 is part of the active site. Residues D172–N241 form the DRBM domain.

This sequence belongs to the ribonuclease III family. Homodimer. Mg(2+) serves as cofactor.

The protein resides in the cytoplasm. It catalyses the reaction Endonucleolytic cleavage to 5'-phosphomonoester.. Its function is as follows. Digests double-stranded RNA. Involved in the processing of primary rRNA transcript to yield the immediate precursors to the large and small rRNAs (23S and 16S). Processes some mRNAs, and tRNAs when they are encoded in the rRNA operon. Processes pre-crRNA and tracrRNA of type II CRISPR loci if present in the organism. This is Ribonuclease 3 from Staphylococcus epidermidis (strain ATCC 12228 / FDA PCI 1200).